A 365-amino-acid chain; its full sequence is MAEKEVPLTAVKVEALVVMKIIKHGSQAFPTTATGSIVGMDVDGTLEITNSFPFPVVEVPAESHFDNTAPNPAAAAPRAKANAAYEAEMVRMMREVNVDANNVGWYTSANMGNFINMNVIENQFFYQKEMNERTVALVHDVSRSAQGSLSLRAFRLSPKFMAAFKENKFTSEELQKSNLRYQDILVELPVEIHNSHLITSFIHQLQTPTQATPSDLPPSLAALESSQYAKSSVLAPNFDNLSLSIDPFLEKNCDLLLDSIEVHHTETNNFQYYQRSLAREQAKITAWQNKRKTENASRAALKQPLLPEDEWQRLFKLPQEPSRLDSMLNSRQVEQYARQVDSFVSATTGKMFAVKGNLLPGETAK.

The region spanning 11 to 160 (VKVEALVVMK…LRAFRLSPKF (150 aa)) is the MPN domain.

The protein belongs to the eIF-3 subunit H family. As to quaternary structure, component of the eukaryotic translation initiation factor 3 (eIF-3) complex.

The protein localises to the cytoplasm. Functionally, component of the eukaryotic translation initiation factor 3 (eIF-3) complex, which is involved in protein synthesis of a specialized repertoire of mRNAs and, together with other initiation factors, stimulates binding of mRNA and methionyl-tRNAi to the 40S ribosome. The eIF-3 complex specifically targets and initiates translation of a subset of mRNAs involved in cell proliferation. In Aspergillus niger (strain ATCC MYA-4892 / CBS 513.88 / FGSC A1513), this protein is Eukaryotic translation initiation factor 3 subunit H.